The sequence spans 264 residues: Probable amino-acid-binding protein YxeM (264 aa).

Positions 1–20 (MKMKKWTVLVVAALLAVLSA) are cleaved as a signal peptide. C21 is lipidated: N-palmitoyl cysteine. C21 carries the S-diacylglycerol cysteine lipid modification.

The protein belongs to the bacterial solute-binding protein 3 family. As to quaternary structure, the complex is composed of two ATP-binding proteins (YxeO), two transmembrane proteins (YxeN) and a solute-binding protein (YxeM).

It localises to the cell membrane. The protein localises to the membrane raft. Probably part of the ABC transporter complex YxeMNO that could be involved in amino-acid import. May transport S-methylcysteine. This chain is Probable amino-acid-binding protein YxeM (yxeM), found in Bacillus subtilis (strain 168).